A 517-amino-acid chain; its full sequence is MDIVGGQNLRQMWDDLAGMYGDKTALIFESCEGIVRQFSYASLNEEINRTANLFYYLGIRKGDRVALHLDNCPEFIFCWFGLAKIGAIMVPINARLLGEESAWILQNSQVSLLVTSAQFYPMYREIRQDNSTPLNHICLIGEQLPADDGVSHFSQLQARQSATLCYTPALSTDDTAEILFTSGTTSRPKGVVITHYNLRFAGYYSAWQIALRDDDVYMTVMPAFHIDCQCTAAMPAFSAGSTFVLLEKYSARAFWDQVRKYQATVTECIPMMIRTLMVQPATPTDRQHHLREVMFYLNLSAQEKDAFTERFGVRLLTSYGMTETIVGIIGDRPGDKRRWPSIGRVGFSYEAEIRDDQNRPLPAGEIGEICIKGIPGKTIFKEYYMQPEATARALEPEGWLHTGDSGYQDEDGYFYFVDRRCNMIKRGGENVSCVELENIISAHPKIQDIVVVGIKDAIRDEAIKAFIVLNEGETLSEAEFFSFCENNMAKFKVPSFMEIRTDLPRNCSGKIIKKNLK.

This sequence belongs to the ATP-dependent AMP-binding enzyme family.

The catalysed reaction is 4-(trimethylamino)butanoate + ATP + CoA = 4-(trimethylamino)butanoyl-CoA + AMP + diphosphate. The enzyme catalyses crotonobetaine + ATP + CoA = crotonobetainyl-CoA + AMP + diphosphate. It catalyses the reaction (R)-carnitine + ATP + CoA = (R)-carnitinyl-CoA + AMP + diphosphate. Its pathway is amine and polyamine metabolism; carnitine metabolism. Its function is as follows. Catalyzes the transfer of CoA to carnitine, generating the initial carnitinyl-CoA needed for the CaiB reaction cycle. Also has activity toward crotonobetaine and gamma-butyrobetaine. In Salmonella typhi, this protein is Crotonobetaine/carnitine--CoA ligase.